The chain runs to 1121 residues: tRNA (34-2'-O)-methyltransferase regulator WDR6 (1121 aa).

M1 carries the N-acetylmethionine modification. WD repeat units lie at residues 53 to 97, 105 to 143, 147 to 189, 200 to 238, 247 to 285, 289 to 327, 335 to 376, 381 to 422, 425 to 470, 476 to 520, 559 to 598, 604 to 642, 645 to 684, 739 to 785, 848 to 893, 901 to 946, 970 to 1012, 1036 to 1073, and 1079 to 1121; these read IKRV…VVKI, RELW…LYDP, CILQ…VWYP, APDR…IWKV, RVQN…VWSH, ILQA…LWHL, LGVS…LYDV, WEQL…VVPI, PTAA…ISAA, IFVK…LFPS, PVST…FVRD, VLRQ…VWNP, HEKL…LYRA, LTDI…VWGI, HNRH…LFLL, QLLA…FWDL, GTPS…VFVL, EEYS…FWRL, and TFMN…NWYD.

Belongs to the WD repeat WDR6 family. As to quaternary structure, interacts with FTSJ1; the interaction is direct, and required for 2'-O-methylation of position 34 in substrate tRNAs. Interacts with IRS4. Interacts with STK11/LKB1.

The protein resides in the cytoplasm. Functionally, together with methyltransferase FTSJ1, methylates the 2'-O-ribose of nucleotides at position 34 of the tRNA anticodon loop of substrate tRNAs. Required for the correct positioning of the substrate tRNA for methylation. Required to suppress amino acid starvation-induced autophagy. Enhances the STK11/LKB1-induced cell growth suppression activity. The protein is tRNA (34-2'-O)-methyltransferase regulator WDR6 (WDR6) of Pongo abelii (Sumatran orangutan).